A 148-amino-acid polypeptide reads, in one-letter code: Large ribosomal subunit protein bL9 (148 aa).

This sequence belongs to the bacterial ribosomal protein bL9 family.

Functionally, binds to the 23S rRNA. The polypeptide is Large ribosomal subunit protein bL9 (Stutzerimonas stutzeri (strain A1501) (Pseudomonas stutzeri)).